The chain runs to 118 residues: Small ribosomal subunit protein uS13 (118 aa).

The segment at 91-118 (HRRSLPVRGQRTKTNARTRKGPRKPIKA) is disordered.

The protein belongs to the universal ribosomal protein uS13 family. As to quaternary structure, part of the 30S ribosomal subunit. Forms a loose heterodimer with protein S19. Forms two bridges to the 50S subunit in the 70S ribosome.

Its function is as follows. Located at the top of the head of the 30S subunit, it contacts several helices of the 16S rRNA. In the 70S ribosome it contacts the 23S rRNA (bridge B1a) and protein L5 of the 50S subunit (bridge B1b), connecting the 2 subunits; these bridges are implicated in subunit movement. Contacts the tRNAs in the A and P-sites. The protein is Small ribosomal subunit protein uS13 of Francisella philomiragia subsp. philomiragia (strain ATCC 25017 / CCUG 19701 / FSC 153 / O#319-036).